An 836-amino-acid chain; its full sequence is DNA gyrase subunit A (836 aa).

A Topo IIA-type catalytic domain is found at 46–510; it reads LPDARDGLKP…ISEEIDDESL (465 aa). The active-site O-(5'-phospho-DNA)-tyrosine intermediate is the Tyr-134. The short motif at 537–543 is the GyrA-box element; sequence QHRGGVG.

Belongs to the type II topoisomerase GyrA/ParC subunit family. As to quaternary structure, heterotetramer, composed of two GyrA and two GyrB chains. In the heterotetramer, GyrA contains the active site tyrosine that forms a transient covalent intermediate with DNA, while GyrB binds cofactors and catalyzes ATP hydrolysis.

It localises to the cytoplasm. It catalyses the reaction ATP-dependent breakage, passage and rejoining of double-stranded DNA.. Its function is as follows. A type II topoisomerase that negatively supercoils closed circular double-stranded (ds) DNA in an ATP-dependent manner to modulate DNA topology and maintain chromosomes in an underwound state. Negative supercoiling favors strand separation, and DNA replication, transcription, recombination and repair, all of which involve strand separation. Also able to catalyze the interconversion of other topological isomers of dsDNA rings, including catenanes and knotted rings. Type II topoisomerases break and join 2 DNA strands simultaneously in an ATP-dependent manner. The polypeptide is DNA gyrase subunit A (Mycoplasma genitalium (strain ATCC 33530 / DSM 19775 / NCTC 10195 / G37) (Mycoplasmoides genitalium)).